Consider the following 103-residue polypeptide: Co-chaperonin GroES (103 aa).

The protein belongs to the GroES chaperonin family. Heptamer of 7 subunits arranged in a ring. Interacts with the chaperonin GroEL.

It localises to the cytoplasm. Functionally, together with the chaperonin GroEL, plays an essential role in assisting protein folding. The GroEL-GroES system forms a nano-cage that allows encapsulation of the non-native substrate proteins and provides a physical environment optimized to promote and accelerate protein folding. GroES binds to the apical surface of the GroEL ring, thereby capping the opening of the GroEL channel. This chain is Co-chaperonin GroES, found in Prochlorococcus marinus (strain MIT 9515).